The chain runs to 361 residues: Phospho-N-acetylmuramoyl-pentapeptide-transferase (361 aa).

A run of 10 helical transmembrane segments spans residues 25-45 (RGIL…PAVI), 73-93 (TMGG…WGDL), 98-118 (VWLV…DDWI), 139-159 (IFGL…AAIT), 168-188 (IALP…IVGF), 200-220 (GLAI…AYAS), 237-257 (AGEL…FLWF), 264-284 (VFMG…IAVI), 290-310 (VLVI…IQVV), and 339-359 (VIVR…ATLK).

Belongs to the glycosyltransferase 4 family. MraY subfamily. The cofactor is Mg(2+).

It is found in the cell inner membrane. The enzyme catalyses UDP-N-acetyl-alpha-D-muramoyl-L-alanyl-gamma-D-glutamyl-meso-2,6-diaminopimeloyl-D-alanyl-D-alanine + di-trans,octa-cis-undecaprenyl phosphate = di-trans,octa-cis-undecaprenyl diphospho-N-acetyl-alpha-D-muramoyl-L-alanyl-D-glutamyl-meso-2,6-diaminopimeloyl-D-alanyl-D-alanine + UMP. It functions in the pathway cell wall biogenesis; peptidoglycan biosynthesis. Functionally, catalyzes the initial step of the lipid cycle reactions in the biosynthesis of the cell wall peptidoglycan: transfers peptidoglycan precursor phospho-MurNAc-pentapeptide from UDP-MurNAc-pentapeptide onto the lipid carrier undecaprenyl phosphate, yielding undecaprenyl-pyrophosphoryl-MurNAc-pentapeptide, known as lipid I. This is Phospho-N-acetylmuramoyl-pentapeptide-transferase from Xanthomonas euvesicatoria pv. vesicatoria (strain 85-10) (Xanthomonas campestris pv. vesicatoria).